We begin with the raw amino-acid sequence, 383 residues long: 1-deoxy-D-xylulose 5-phosphate reductoisomerase (383 aa).

NADPH is bound by residues T10, G11, S12, I13, G36, R37, N38, and N122. Position 123 (K123) interacts with 1-deoxy-D-xylulose 5-phosphate. E124 is an NADPH binding site. Residue D148 participates in Mn(2+) binding. S149, E150, S174, and H197 together coordinate 1-deoxy-D-xylulose 5-phosphate. E150 serves as a coordination point for Mn(2+). An NADPH-binding site is contributed by G203. 1-deoxy-D-xylulose 5-phosphate contacts are provided by S210, N215, K216, and E219. E219 provides a ligand contact to Mn(2+).

It belongs to the DXR family. It depends on Mg(2+) as a cofactor. Mn(2+) serves as cofactor.

The catalysed reaction is 2-C-methyl-D-erythritol 4-phosphate + NADP(+) = 1-deoxy-D-xylulose 5-phosphate + NADPH + H(+). It functions in the pathway isoprenoid biosynthesis; isopentenyl diphosphate biosynthesis via DXP pathway; isopentenyl diphosphate from 1-deoxy-D-xylulose 5-phosphate: step 1/6. Catalyzes the NADPH-dependent rearrangement and reduction of 1-deoxy-D-xylulose-5-phosphate (DXP) to 2-C-methyl-D-erythritol 4-phosphate (MEP). This chain is 1-deoxy-D-xylulose 5-phosphate reductoisomerase, found in Bacillus pumilus (strain SAFR-032).